Here is a 352-residue protein sequence, read N- to C-terminus: Quinolinate synthase (352 aa).

Residues histidine 48 and serine 69 each coordinate iminosuccinate. Cysteine 114 is a binding site for [4Fe-4S] cluster. Residues 140–142 and serine 157 contribute to the iminosuccinate site; that span reads YAN. Cysteine 201 provides a ligand contact to [4Fe-4S] cluster. Residues 227-229 and threonine 244 contribute to the iminosuccinate site; that span reads HPE. Cysteine 298 provides a ligand contact to [4Fe-4S] cluster.

The protein belongs to the quinolinate synthase family. Type 1 subfamily. The cofactor is [4Fe-4S] cluster.

It localises to the cytoplasm. It catalyses the reaction iminosuccinate + dihydroxyacetone phosphate = quinolinate + phosphate + 2 H2O + H(+). It functions in the pathway cofactor biosynthesis; NAD(+) biosynthesis; quinolinate from iminoaspartate: step 1/1. Functionally, catalyzes the condensation of iminoaspartate with dihydroxyacetone phosphate to form quinolinate. The protein is Quinolinate synthase of Pseudomonas syringae pv. tomato (strain ATCC BAA-871 / DC3000).